The chain runs to 1414 residues: DNA-directed RNA polymerase subunit beta' (1414 aa).

Zn(2+)-binding residues include Cys70, Cys72, Cys85, and Cys88. Mg(2+) contacts are provided by Asp460, Asp462, and Asp464. Residues Cys814, Cys888, Cys895, and Cys898 each contribute to the Zn(2+) site. The segment covering 1392–1403 (EQALSEALKSSA) has biased composition (low complexity). A disordered region spans residues 1392-1414 (EQALSEALKSSAPQEAKAAQKDE).

This sequence belongs to the RNA polymerase beta' chain family. In terms of assembly, the RNAP catalytic core consists of 2 alpha, 1 beta, 1 beta' and 1 omega subunit. When a sigma factor is associated with the core the holoenzyme is formed, which can initiate transcription. It depends on Mg(2+) as a cofactor. The cofactor is Zn(2+).

It catalyses the reaction RNA(n) + a ribonucleoside 5'-triphosphate = RNA(n+1) + diphosphate. Its function is as follows. DNA-dependent RNA polymerase catalyzes the transcription of DNA into RNA using the four ribonucleoside triphosphates as substrates. The protein is DNA-directed RNA polymerase subunit beta' of Coxiella burnetii (strain Dugway 5J108-111).